Reading from the N-terminus, the 108-residue chain is Cell wall protein PGA48 (108 aa).

Positions 1–17 are cleaved as a signal peptide; sequence MFKFVIYLFTFIAFANA. Asn18, Asn41, and Asn77 each carry an N-linked (GlcNAc...) asparagine glycan. Asn84 carries GPI-anchor amidated asparagine lipidation. The propeptide at 85 to 108 is removed in mature form; the sequence is GASKLNLRSLAGAGLVAAIFIAFI.

The protein belongs to the SED1 family. In terms of processing, the GPI-anchor is attached to the protein in the endoplasmic reticulum and serves to target the protein to the cell surface. There, the glucosamine-inositol phospholipid moiety is cleaved off and the GPI-modified mannoprotein is covalently attached via its lipidless GPI glycan remnant to the 1,6-beta-glucan of the outer cell wall layer.

It is found in the secreted. The protein resides in the cell wall. It localises to the membrane. Its function is as follows. Cell wall protein that plays a role in adaptation and resistance to cell wall stress. The chain is Cell wall protein PGA48 (PGA48) from Candida albicans (strain SC5314 / ATCC MYA-2876) (Yeast).